A 429-amino-acid polypeptide reads, in one-letter code: UDP-N-acetylglucosamine 1-carboxyvinyltransferase (429 aa).

Phosphoenolpyruvate is bound at residue 22–23 (KN). R102 lines the UDP-N-acetyl-alpha-D-glucosamine pocket. The active-site Proton donor is C126. C126 is subject to 2-(S-cysteinyl)pyruvic acid O-phosphothioketal. Residues 131–135 (RPVDL), D316, and I338 each bind UDP-N-acetyl-alpha-D-glucosamine.

It belongs to the EPSP synthase family. MurA subfamily.

The protein localises to the cytoplasm. The catalysed reaction is phosphoenolpyruvate + UDP-N-acetyl-alpha-D-glucosamine = UDP-N-acetyl-3-O-(1-carboxyvinyl)-alpha-D-glucosamine + phosphate. The protein operates within cell wall biogenesis; peptidoglycan biosynthesis. Cell wall formation. Adds enolpyruvyl to UDP-N-acetylglucosamine. The protein is UDP-N-acetylglucosamine 1-carboxyvinyltransferase of Rhodopseudomonas palustris (strain BisA53).